Reading from the N-terminus, the 166-residue chain is Interleukin-3 (166 aa).

The signal sequence occupies residues 1–26 (MVLASSTTSIHTMLLLLLMLFHLGLQ). The N-linked (GlcNAc...) asparagine glycan is linked to N42. 2 disulfides stabilise this stretch: C43–C106 and C105–C166. A glycan (N-linked (GlcNAc...) asparagine; partial) is linked at N112. Residues 145 to 166 (LTSRPPQPASGSVSPNRGTVEC) form a disordered region.

Belongs to the IL-3 family. As to quaternary structure, monomer. As to expression, activated T-cells, mast cells, natural killer cells.

The protein resides in the secreted. In terms of biological role, cytokine secreted predominantly by activated T-lymphocytes as well as mast cells and osteoblastic cells that controls the production and differentiation of hematopoietic progenitor cells into lineage-restricted cells. Also stimulates mature basophils, eosinophils, and monocytes to become functionally activated. In addition, plays an important role in neural cell proliferation and survival. Participates as well in bone homeostasis and inhibits osteoclast differentiation by preventing NF-kappa-B nuclear translocation and activation. Mechanistically, exerts its biological effects through a receptor composed of IL3RA subunit and a signal transducing subunit IL3RB. Receptor stimulation results in the rapid activation of JAK2 kinase activity leading to STAT5-mediated transcriptional program. Alternatively, contributes to cell survival under oxidative stress in non-hematopoietic systems by activating pathways mediated by PI3K/AKT and ERK. The protein is Interleukin-3 (Il3) of Mus musculus (Mouse).